The chain runs to 78 residues: MKLIIFTGLALLLIVSLIDVEAQNEGACLPRGSVCTTNHASCCSKLSCDCYRRFEKGVEKGQKCWRIPTGLRYSKEKE.

Positions 1–22 (MKLIIFTGLALLLIVSLIDVEA) are cleaved as a signal peptide. Residues 23-26 (QNEG) constitute a propeptide that is removed on maturation.

The protein belongs to the neurotoxin 19 (CSTX) family. 07 (U7-Lctx) subfamily. In terms of processing, contains 4 disulfide bonds. Expressed by the venom gland.

It is found in the secreted. In Lycosa singoriensis (Wolf spider), this protein is U7-lycotoxin-Ls1f.